Consider the following 503-residue polypeptide: Maturase K (503 aa).

It belongs to the intron maturase 2 family. MatK subfamily.

The protein resides in the plastid. It localises to the chloroplast. Its function is as follows. Usually encoded in the trnK tRNA gene intron. Probably assists in splicing its own and other chloroplast group II introns. The protein is Maturase K of Eucalyptus globulus (Tasmanian blue gum).